We begin with the raw amino-acid sequence, 183 residues long: Inner membrane-spanning protein YciB (183 aa).

5 helical membrane-spanning segments follow: residues 22–44 (IYTATGALVVVTGLQLIYSWVRY), 54–74 (TFLLVGFFGGLTVFFHDDAFI), 76–96 (WKVTVINILFALGLLISRYGF), 119–139 (VNLAWVGFFTVCGLLNLYVAF), and 149–169 (FKVFGLLGMTLVFTLLSGVYL).

The protein belongs to the YciB family.

Its subcellular location is the cell inner membrane. Plays a role in cell envelope biogenesis, maintenance of cell envelope integrity and membrane homeostasis. The polypeptide is Inner membrane-spanning protein YciB (Aeromonas salmonicida (strain A449)).